A 252-amino-acid chain; its full sequence is MKTVTVRDLVVGEGAPKIIVSLMGKTITDVKSEALAYREADFDILEWRVDHFANVTTAESVLEAAGAIREIITDKPLLFTFRSAKEGGEQALTTGQYIALNRAAVDSGLVDMIDLELFTGDDEVKATVGYAHQHNVAVIMSNHDFHKTPAAEEIVQRLRKMQELGADIPKIAVMPQTKADVLTLLTATVEMQERYADRPIITMSMSKTGVISRLAGEVFGSAATFGAVKKASAPGQISVADLRTVLTILHQA.

3-dehydroquinate-binding positions include S21, 46-48, and R82; that span reads EWR. Catalysis depends on H143, which acts as the Proton donor/acceptor. K170 (schiff-base intermediate with substrate) is an active-site residue. Residues R213, S232, and Q236 each coordinate 3-dehydroquinate.

Belongs to the type-I 3-dehydroquinase family. In terms of assembly, homodimer.

The catalysed reaction is 3-dehydroquinate = 3-dehydroshikimate + H2O. It functions in the pathway metabolic intermediate biosynthesis; chorismate biosynthesis; chorismate from D-erythrose 4-phosphate and phosphoenolpyruvate: step 3/7. In terms of biological role, involved in the third step of the chorismate pathway, which leads to the biosynthesis of aromatic amino acids. Catalyzes the cis-dehydration of 3-dehydroquinate (DHQ) and introduces the first double bond of the aromatic ring to yield 3-dehydroshikimate. The sequence is that of 3-dehydroquinate dehydratase from Salmonella dublin (strain CT_02021853).